The following is a 569-amino-acid chain: MMRFTKFYAPSLKEAPKDASLPSHIFLTRAGFVEQIGSGLYNFLPLGKRVLDKIKNIVKEEMDKAGAQEVNLSFITPASLWQESGRYNVFGKELLRFKDRKENEFVLGPTHEEAMLSLVKNKITSYKQLPLHLYQIGLKFRDEARPRFGLLRCREFLMKDGYSFHANEEDLGREFELMYKTYSQILQRMGLDFRAVEADSGAIGGSGSKEFMVLAKNGEDDILICENCDYAANVEAAKRAKKTCQDERPEANYASKFHTPNIKTIDSLAQFFKINAFYTIKAVVKKAIYENESKLVVFFIRGSDDLQEVKAQNACSALELVDASEEELEKAGLVAGFIGFVGLKDIDFYIDFELENEKQMIMGANEKDYHLIGIDVVNLNKDRFKDLIEVKEGDCCVKCGAKLKQSKGIEVGHIFKLGQKYSKAMNANFLDENGKSQPFYMGCYGIGVSRLLAVATEASHDEKGCIWNKTLAPFVLEIIVSNLKDEKALEFANKLYEDLTNLGLEVLLDDRNERFGVKMNDFELMGFPYALVVGKGLEKNEIELIQREGLIKELIKTDELMEILKKKVL.

This sequence belongs to the class-II aminoacyl-tRNA synthetase family. ProS type 1 subfamily. In terms of assembly, homodimer.

It localises to the cytoplasm. It catalyses the reaction tRNA(Pro) + L-proline + ATP = L-prolyl-tRNA(Pro) + AMP + diphosphate. Its function is as follows. Catalyzes the attachment of proline to tRNA(Pro) in a two-step reaction: proline is first activated by ATP to form Pro-AMP and then transferred to the acceptor end of tRNA(Pro). As ProRS can inadvertently accommodate and process non-cognate amino acids such as alanine and cysteine, to avoid such errors it has two additional distinct editing activities against alanine. One activity is designated as 'pretransfer' editing and involves the tRNA(Pro)-independent hydrolysis of activated Ala-AMP. The other activity is designated 'posttransfer' editing and involves deacylation of mischarged Ala-tRNA(Pro). The misacylated Cys-tRNA(Pro) is not edited by ProRS. This is Proline--tRNA ligase from Campylobacter jejuni (strain RM1221).